Here is a 745-residue protein sequence, read N- to C-terminus: MGVPFFSSLRCMVDLGPCWAGGLTAEMKLLLALAGLLAILATPQPSEGAAPAVLGEVDTSLVLSSMEEAKQLVDKAYKERRESIKQRLRSGSASPMELLSYFKQPVAATRTAVRAADYLHVALDLLERKLRSLWRRPFNVTDVLTPAQLNVLSKSSGCAYQDVGVTCPEQDKYRTITGMCNNRRSPTLGASNRAFVRWLPAEYEDGFSLPYGWTPGVKRNGFPVALARAVSNEIVRFPTDQLTPDQERSLMFMQWGQLLDHDLDFTPEPAARASFVTGVNCETSCVQQPPCFPLKIPPNDPRIKNQADCIPFFRSCPACPGSNITIRNQINALTSFVDASMVYGSEEPLARNLRNMSNQLGLLAVNQRFQDNGRALLPFDNLHDDPCLLTNRSARIPCFLAGDTRSSEMPELTSMHTLLLREHNRLATELKSLNPRWDGERLYQEARKIVGAMVQIITYRDYLPLVLGPTAMRKYLPTYRSYNDSVDPRIANVFTNAFRYGHTLIQPFMFRLDNRYQPMEPNPRVPLSRVFFASWRVVLEGGIDPILRGLMATPAKLNRQNQIAVDEIRERLFEQVMRIGLDLPALNMQRSRDHGLPGYNAWRRFCGLPQPETVGQLGTVLRNLKLARKLMEQYGTPNNIDIWMGGVSEPLKRKGRVGPLLACIIGTQFRKLRDGDRFWWENEGVFSMQQRQALAQISLPRIICDNTGITTVSKNNIFMSNSYPRDFVNCSTLPALNLASWREAS.

Positions 1 to 48 (MGVPFFSSLRCMVDLGPCWAGGLTAEMKLLLALAGLLAILATPQPSEG) are cleaved as a signal peptide. N-linked (GlcNAc...) asparagine glycosylation occurs at asparagine 139. An intrachain disulfide couples cysteine 167 to cysteine 180. Aspartate 260 serves as a coordination point for heme b. Histidine 261 functions as the Proton acceptor in the catalytic mechanism. Aspartate 262 serves as a coordination point for Ca(2+). Intrachain disulfides connect cysteine 281–cysteine 291 and cysteine 285–cysteine 309. Cysteine 316 is subject to Cysteine sulfenic acid (-SOH). Asparagine 323 is a glycosylation site (N-linked (GlcNAc...) asparagine). Positions 334, 336, 338, and 340 each coordinate Ca(2+). Residues asparagine 355 and asparagine 391 are each glycosylated (N-linked (GlcNAc...) asparagine). Residues cysteine 387 and cysteine 398 are joined by a disulfide bond. Residues glutamate 408 and methionine 409 each contribute to the heme b site. Asparagine 483 carries an N-linked (GlcNAc...) asparagine glycan. Histidine 502 contacts heme b. Cystine bridges form between cysteine 606-cysteine 663 and cysteine 704-cysteine 730. Asparagine 729 carries N-linked (GlcNAc...) asparagine glycosylation.

Belongs to the peroxidase family. XPO subfamily. As to quaternary structure, homodimer; disulfide-linked. Each monomer consists of a light and a heavy chain. Found in a complex with CP and LTF; interacts directly with CP, which protects CP antioxidant properties by MPO. The cofactor is Ca(2+). Requires heme b as cofactor.

It localises to the lysosome. It carries out the reaction chloride + H2O2 + H(+) = hypochlorous acid + H2O. Functionally, part of the host defense system of polymorphonuclear leukocytes. It is responsible for microbicidal activity against a wide range of organisms. In the stimulated PMN, MPO catalyzes the production of hypohalous acids, primarily hypochlorous acid in physiologic situations, and other toxic intermediates that greatly enhance PMN microbicidal activity. Mediates the proteolytic cleavage of alpha-1-microglobulin to form t-alpha-1-microglobulin, which potently inhibits oxidation of low-density lipoprotein particles and limits vascular damage. The chain is Myeloperoxidase from Homo sapiens (Human).